The chain runs to 73 residues: Putative membrane protein insertion efficiency factor (73 aa).

It belongs to the UPF0161 family.

Its subcellular location is the cell inner membrane. Functionally, could be involved in insertion of integral membrane proteins into the membrane. In Dinoroseobacter shibae (strain DSM 16493 / NCIMB 14021 / DFL 12), this protein is Putative membrane protein insertion efficiency factor.